A 396-amino-acid polypeptide reads, in one-letter code: Probable isocitrate dehydrogenase [NAD] gamma 2, mitochondrial (396 aa).

The transit peptide at 1–25 (MLAVTSCSMKTVLQYAVFLGHSREV) directs the protein to the mitochondrion. A citrate-binding site is contributed by T117. R133, R164, and D251 together coordinate substrate. D251 is a binding site for Mn(2+). N321 lines the ADP pocket.

It belongs to the isocitrate and isopropylmalate dehydrogenases family. As to quaternary structure, heterooligomer of subunits alpha (IDH3A), beta (IDH3B), and gamma (IDH3G) in the apparent ratio of 2:1:1. The heterodimer containing one IDH3A and one IDH3B subunit and the heterodimer containing one IDH3A and one IDH3G subunit assemble into a heterotetramer (which contains two subunits of IDH3A, one of IDH3B and one of IDH3G) and further into the heterooctamer. The cofactor is Mg(2+). Mn(2+) serves as cofactor.

It localises to the mitochondrion. The heterotetramer and the heterodimer composed of IDH3A and IDH3G subunits can be allosterically activated by citrate (CIT) or/and ADP, and the two activators can act independently or synergistically. The heterodimer composed of IDH3A and IDH3B subunits cannot be allosterically regulated and the allosteric regulation of the heterotetramer is through the IDH3G subunit and not the IDH3B subunit. The IDH3G subunit contains the allosteric site which consists of a CIT-binding site and an ADP-binding site, and the binding of CIT and ADP causes conformational changes at the allosteric site which are transmitted to the active site in the catalytic subunit (IDH3A) through a cascade of conformational changes at the heterodimer interface, leading to stabilization of the isocitrate-binding at the active site and thus activation of the enzyme. ATP can activate the heterotetramer and the heterodimer composed of IDH3A and IDH3G subunits at low concentrations but inhibits their activities at high concentrations, whereas ATP exhibits only inhibitory effect on the heterodimer composed of IDH3A and IDH3B subunits. Its function is as follows. Regulatory subunit which plays a role in the allosteric regulation of the enzyme catalyzing the decarboxylation of isocitrate (ICT) into alpha-ketoglutarate. The heterodimer composed of the alpha (IDH3A) and beta (IDH3B) subunits and the heterodimer composed of the alpha (IDH3A) and gamma (IDH3G) subunits, have considerable basal activity but the full activity of the heterotetramer (containing two subunits of IDH3A, one of IDH3B and one of IDH3G) requires the assembly and cooperative function of both heterodimers. The protein is Probable isocitrate dehydrogenase [NAD] gamma 2, mitochondrial of Mus musculus (Mouse).